The following is a 554-amino-acid chain: Folate synthesis bifunctional protein, mitochondrial (554 aa).

A mitochondrion-targeting transit peptide spans 1–42; sequence MAPLLSQTLIHTGRFLLRRFLEPPPAVISAVAASRVCFHRYY. Positions 90 to 215 are HPPK; that stretch reads VIALGSNIGN…SFVLAPLVDL (126 aa). A Pterin-binding domain is found at 273–541; that stretch reads THVMGILNLT…NVRHNADAAK (269 aa). The segment at 275 to 554 is DHPS; it reads VMGILNLTPD…AMLRRRRSKG (280 aa). Residue N280 participates in Mg(2+) binding. (7,8-dihydropterin-6-yl)methyl diphosphate is bound by residues T320, D357, N376, D449, K494, and 529–531; that span reads RVH.

It in the N-terminal section; belongs to the HPPK family. This sequence in the C-terminal section; belongs to the DHPS family. Mg(2+) is required as a cofactor. Ubiquitous.

It localises to the mitochondrion. It catalyses the reaction 6-hydroxymethyl-7,8-dihydropterin + ATP = (7,8-dihydropterin-6-yl)methyl diphosphate + AMP + H(+). The catalysed reaction is (7,8-dihydropterin-6-yl)methyl diphosphate + 4-aminobenzoate = 7,8-dihydropteroate + diphosphate. It participates in cofactor biosynthesis; tetrahydrofolate biosynthesis; 2-amino-4-hydroxy-6-hydroxymethyl-7,8-dihydropteridine diphosphate from 7,8-dihydroneopterin triphosphate: step 4/4. It functions in the pathway cofactor biosynthesis; tetrahydrofolate biosynthesis; 7,8-dihydrofolate from 2-amino-4-hydroxy-6-hydroxymethyl-7,8-dihydropteridine diphosphate and 4-aminobenzoate: step 1/2. Catalyzes the first two consecutive steps of tetrahydrofolate biosynthesis. The protein is Folate synthesis bifunctional protein, mitochondrial of Arabidopsis thaliana (Mouse-ear cress).